Here is a 377-residue protein sequence, read N- to C-terminus: N5-carboxyaminoimidazole ribonucleotide synthase (377 aa).

Residues R93, K133, 138–144 (GYDGRGQ), 175–178 (EEFV), E183, H206, and 257–258 (NE) contribute to the ATP site. Positions 97 to 287 (KTLLDHAGVR…QFENHLRAVC (191 aa)) constitute an ATP-grasp domain.

This sequence belongs to the PurK/PurT family. In terms of assembly, homodimer.

The enzyme catalyses 5-amino-1-(5-phospho-beta-D-ribosyl)imidazole + hydrogencarbonate + ATP = 5-carboxyamino-1-(5-phospho-D-ribosyl)imidazole + ADP + phosphate + 2 H(+). Its pathway is purine metabolism; IMP biosynthesis via de novo pathway; 5-amino-1-(5-phospho-D-ribosyl)imidazole-4-carboxylate from 5-amino-1-(5-phospho-D-ribosyl)imidazole (N5-CAIR route): step 1/2. Its function is as follows. Catalyzes the ATP-dependent conversion of 5-aminoimidazole ribonucleotide (AIR) and HCO(3)(-) to N5-carboxyaminoimidazole ribonucleotide (N5-CAIR). This is N5-carboxyaminoimidazole ribonucleotide synthase from Vibrio vulnificus (strain YJ016).